The primary structure comprises 623 residues: Heterogeneous nuclear ribonucleoprotein L (623 aa).

Positions 1 to 16 (MSRRLLPRAEKRRRRL) are enriched in basic residues. The segment at 1-97 (MSRRLLPRAE…NYDDPHKTPA (97 aa)) is disordered. Residues 17-27 (EQRQQPDEQLR) show a composition bias toward basic and acidic residues. A compositionally biased stretch (low complexity) spans 28–37 (RAGAMVKMAA). The span at 38 to 54 (AGGGGGGGRYYGGGNEG) shows a compositional bias: gly residues. Residues Lys59 and Lys62 each participate in a glycyl lysine isopeptide (Lys-Gly) (interchain with G-Cter in SUMO2) cross-link. Positions 69 to 87 (QHGGGGGGGSGAAGGGGGE) are enriched in gly residues. Ser98 carries the phosphoserine modification. The RRM 1 domain maps to 99–173 (PVVHIRGLID…HPAFVNYSTS (75 aa)). Lys133 participates in a covalent cross-link: Glycyl lysine isopeptide (Lys-Gly) (interchain with G-Cter in SUMO2). Ser182 carries the phosphoserine modification. In terms of domain architecture, RRM 2 spans 190-267 (SVLLFTILNP…CTLKIEYAKP (78 aa)). Lys266 carries the N6-acetyllysine modification. Polar residues predominate over residues 281–298 (DYTNPNLSGQGDPGSNPN). The interval 281–413 (DYTNPNLSGQ…PPPPDYGPHA (133 aa)) is disordered. 2 positions are modified to phosphoserine: Ser288 and Ser295. A Glycyl lysine isopeptide (Lys-Gly) (interchain with G-Cter in SUMO2) cross-link involves residue Lys299. Asymmetric dimethylarginine is present on residues Arg388 and Arg392. Pro residues predominate over residues 398–409 (GHPPPPPPPPDY). Ser415 is subject to Phosphoserine. RRM domains are found at residues 416–490 (PVLM…VSKQ) and 498–586 (SYGL…WDSK). Ser578 carries the post-translational modification Phosphoserine; by CaMK4. Residue Lys602 forms a Glycyl lysine isopeptide (Lys-Gly) (interchain with G-Cter in SUMO2) linkage.

Identified in a IGF2BP1-dependent mRNP granule complex containing untranslated mRNAs. Interacts with HNRNPLL. Interacts with APEX1; the interaction is DNA-dependent. Component of a complex with SETD2. Interacts with ELAVL1. Part of a transcription inhibitory ribonucleoprotein complex composed at least of the circular RNA circZNF827, ZNF827 and HNRNPK. Interacts with CHD8 in an RNA-dependent manner. In terms of processing, several isoelectric forms of the L protein are probably the results of post-translational modifications. Post-translationally, phosphorylation at Ser-578 by CaMK4 enhances interaction with a CaMK4-responsive RNA element (CaRRE1), and prevents inclusion of the stress axis-regulated exon (STREX) of the KCNMA1 potassium channel transcripts upon membrane depolarization.

It is found in the nucleus. The protein localises to the nucleoplasm. Its subcellular location is the cytoplasm. Functionally, splicing factor binding to exonic or intronic sites and acting as either an activator or repressor of exon inclusion. Exhibits a binding preference for CA-rich elements. Component of the heterogeneous nuclear ribonucleoprotein (hnRNP) complexes and associated with most nascent transcripts. Associates, together with APEX1, to the negative calcium responsive element (nCaRE) B2 of the APEX2 promoter. As part of a ribonucleoprotein complex composed at least of ZNF827, HNRNPK and the circular RNA circZNF827 that nucleates the complex on chromatin, may negatively regulate the transcription of genes involved in neuronal differentiation. Regulates alternative splicing of a core group of genes involved in neuronal differentiation, likely by mediating H3K36me3-coupled transcription elongation and co-transcriptional RNA processing via interaction with CHD8. The chain is Heterogeneous nuclear ribonucleoprotein L from Rattus norvegicus (Rat).